Consider the following 2283-residue polypeptide: MAAQVAPAAASSLGNPPPPPSELKKAEQQQREEAGGEAAAAAAERGEMKAAAGQESEGPAVGPPQPLGKELQDGAESNGGGGGGGAGSGGGPGAEPDLKNSNGNAGPRPALNNNLPEPPGGGGGGGSSSSDGVGAPPHSAAAALPPPAYGFGQAYGRSPSAVAAAAAAVFHQQHGGQQSPGLAALQSGGGGGLEPYAGPQQNSHDHGFPNHQYNSYYPNRSAYPPPPQAYALSSPRGGTPGSGAAAAAGSKPPPSSSASASSSSSSFAQQRFGAMGGGGPSAAGGGTPQPTATPTLNQLLTSPSSARGYQGYPGGDYGGGPQDGGAGKGPADMASQCWGAAAAAAAAAAAVSGGAQQRSHHAPMSPGSSGGGGQPLARTPQSSSPMDQMGKMRPQPYGGTNPYSQQQGPPSGPQQGHGYPGQPYGSQTPQRYPMTMQGRAQSAMGSLSYAQQIPPYGQQGPSAYGQQGQTPYYNQQSPHPQQQPPYAQQPPSQTPHAQPSYQQQPQTQQPQLQSSQPPYSQQPSQPPHQQSPTPYPSQQSTTQQHPQSQPPYSQPQAQSPYQQQQPQQPASSSLSQQAAYPQPQPQQSQQTAYSQQRFPPPQELSQDSFGSQASSAPSMTSSKGGQEDMNLSLQSRPSSLPDLSGSIDDLPMGTEGALSPGVSTSGISSSQGEQSNPAQSPFSPHTSPHLPGIRGPSPSPVGSPASVAQSRSGPLSPAAVPGNQMPPRPPSGQSDSIMHPSMNQSSIAQDRGYMQRNPQMPQYTSPQPGSALSPRQPSGGQMHSGVGSYQQNSMGSYGPQGSQYGPQGGYPRQPNYNALPNANYPNAGMAGSMNPMGAGGQMHGQPGIPPYGTLPPGRMAHASMGNRPYGPNMANMPPQVGSGMCPPPGGMNRKTQESAVAMHVAANSIQNRPPGYPNMNQGGMMGTGPPYGQGINSMAGMINPQGPPYPMGGTMANNSAGMAASPEMMGLGDVKLTPATKMNNKADGTPKTESKSKKSSSSTTTNEKITKLYELGGEPERKMWVDRYLAFTEEKAMGMTNLPAVGRKPLDLYRLYVSVKEIGGLTQVNKNKKWRELATNLNVGTSSSAASSLKKQYIQCLYAFECKIERGEDPPPDIFAAADSKKSQPKIQPPSPAGSGSMQGPQTPQSTSSSMAEGGDLKPPTPASTPHSQIPPLPGMSRSNSVGIQDAFPDGSDPTFQKRNSMTPNPGYQPSMNTSDMMGRMSYEPNKDPYGSMRKAPGSDPFMSSGQGPNGGMGDPYSRAAGPGLGSVAMGPRQHYPYGGPYDRVRTEPGIGPEGNMGTGAPQPNLMPSTPDSGMYSPSRYPPQQQQQQQQQHDSYGNQFSTQGTPSSSPFPSQQTTMYQQQQQNYKRPMDGTYGPPAKRHEGEMYSVPYSAGQGQPQQQQLPAAQSQPASQPQAAQPSPQQDVYNQYSNAYPASATAATDRRPAGGPQNQFPFQFGRDRVSAPPGSSAQQNMPPQMMGGPIQASAEVAQQGTMWQGRNDMTYNYANRQNTGSATQGPAYHGVNRTDEMLHTDQRANHEGPWPSHGTRQPPYGPSAPVPPMTRPPPSNYQPPPSMPNHIPQVSSPAPLPRPMENRTSPSKSPFLHSGMKMQKAGPPVPASHIAPTPVQPPMIRRDITFPPGSVEATQPVLKQRRRLTMKDIGTPEAWRVMMSLKSGLLAESTWALDTINILLYDDNSIMTFNLSQLPGLLELLVEYFRRCLIEIFGILKEYEVGDPGQRTLLDPGRFTKVYSPAHTEEEEEEHLDPKLEEEEEEGVGNDEEMAFLGKDKPSSENNEEKLVSKFDKLPVKIVQRNDPFVVDCSDKLGRVQEFDSGLLHWRIGGGDTTEHIQTHFESKIELLPSRPYVPCPTPPRKHLTTVEGTPGTTEQEGPPPDGLPEKRITATMDDMLSTRSSTLTDEGAKSAEATKESSKFPFGISPAQSHRNIKILEDEPHSKDETPLCTLLDWQDSLAKRCVCVSNTIRSLSFVPGNDFEMSKHPGLLLILGKLILLHHKHPERKQAPLTYEKEEEQDQGVSCDKVEWWWDCLEMLRENTLVTLANISGQLDLSPYPESICLPVLDGLLHWAVCPSAEAQDPFSTLGPNAVLSPQRLVLETLSKLSIQDNNVDLILATPPFSRLEKLYSTMVRFLSDRKNPVCREMAVVLLANLAQGDSLAARAIAVQKGSIGNLLGFLEDSLAATQFQQSQASLLHMQNPPFEPTSVDMMRRAARALLALAKVDENHSEFTLYESRLLDISVSPLMNSLVSQVICDVLFLIGQS.

Low complexity predominate over residues 1–10; it reads MAAQVAPAAA. 3 disordered regions span residues 1-333, 346-822, and 979-1006; these read MAAQ…PADM, AAAA…LPNA, and ATKMNNKADGTPKTESKSKKSSSSTTTN. An N-acetylalanine modification is found at Ala-2. Basic and acidic residues predominate over residues 22-34; sequence ELKKAEQQQREEA. A phosphoserine mark is found at Ser-56 and Ser-77. A compositionally biased stretch (gly residues) spans 77-93; sequence SNGGGGGGGAGSGGGPG. Composition is skewed to low complexity over residues 128–143 and 233–266; these read SSSDGVGAPPHSAAAA and SSPRGGTPGSGAAAAAGSKPPPSSSASASSSSSS. Ser-234 carries the phosphoserine modification. A compositionally biased stretch (gly residues) spans 274–287; sequence AMGGGGPSAAGGGT. At Thr-287 the chain carries Phosphothreonine. The short motif at 296–300 is the LXXLL element; the sequence is LNQLL. Polar residues predominate over residues 296-307; it reads LNQLLTSPSSAR. The residue at position 302 (Ser-302) is a Phosphoserine. The segment covering 311–328 has biased composition (gly residues); sequence GYPGGDYGGGPQDGGAGK. Phosphoserine occurs at positions 365 and 384. Low complexity predominate over residues 402–427; the sequence is PYSQQQGPPSGPQQGHGYPGQPYGSQ. Arg-431 carries the asymmetric dimethylarginine modification. 2 stretches are compositionally biased toward polar residues: residues 438–451 and 459–470; these read GRAQSAMGSLSYAQ and QGPSAYGQQGQT. Low complexity-rich tracts occupy residues 471-547 and 554-596; these read PYYN…QHPQ and QPQA…YSQQ. Position 605 is a phosphoserine (Ser-605). Low complexity predominate over residues 611–622; it reads SQASSAPSMTSS. Positions 629–638 are enriched in polar residues; the sequence is MNLSLQSRPS. Over residues 659 to 675 the composition is skewed to low complexity; that stretch reads SPGVSTSGISSSQGEQS. Positions 676 to 686 are enriched in polar residues; sequence NPAQSPFSPHT. A phosphoserine mark is found at Ser-697, Ser-699, Ser-703, Ser-731, Ser-765, and Ser-773. Composition is skewed to polar residues over residues 731–748 and 756–794; these read SGQSDSIMHPSMNQSSIA and RNPQMPQYTSPQPGSALSPRQPSGGQMHSGVGSYQQNSM. Low complexity predominate over residues 795–822; sequence GSYGPQGSQYGPQGGYPRQPNYNALPNA. Residues 1018 to 1109 enclose the ARID domain; the sequence is EPERKMWVDR…CLYAFECKIE (92 aa). Disordered regions lie at residues 1114–1484 and 1539–1636; these read PPPD…MMGG and RANH…PPMI. Residues 1142–1155 show a composition bias toward low complexity; that stretch reads MQGPQTPQSTSSSM. Residues 1163-1178 are compositionally biased toward pro residues; it reads PPTPASTPHSQIPPLP. Ser-1185 carries the phosphoserine modification. Polar residues predominate over residues 1198-1220; that stretch reads PTFQKRNSMTPNPGYQPSMNTSD. Ser-1236 is modified (phosphoserine). Arg-1277 is subject to Omega-N-methylarginine. The segment covering 1343 to 1368 has biased composition (low complexity); the sequence is QFSTQGTPSSSPFPSQQTTMYQQQQQ. Residues 1369–1388 carry the Nuclear localization signal motif; it reads NYKRPMDGTYGPPAKRHEGE. Low complexity predominate over residues 1395–1426; it reads SAGQGQPQQQQLPAAQSQPASQPQAAQPSPQQ. 2 stretches are compositionally biased toward polar residues: residues 1427–1436 and 1469–1478; these read DVYNQYSNAY and PGSSAQQNMP. Pro residues predominate over residues 1555-1579; it reads PYGPSAPVPPMTRPPPSNYQPPPSM. At Ser-1605 the chain carries Phosphoserine. Lys-1613 carries the post-translational modification N6-acetyllysine. The short motif at 1710–1714 is the LXXLL element; the sequence is LPGLL. Disordered stretches follow at residues 1757–1782, 1872–1904, and 1917–1941; these read PAHTEEEEEEHLDPKLEEEEEEGVGN, CPTPPRKHLTTVEGTPGTTEQEGPPPDGLPEKR, and SSTLTDEGAKSAEATKESSKFPFGI. Over residues 1761-1782 the composition is skewed to acidic residues; the sequence is EEEEEEHLDPKLEEEEEEGVGN. Phosphothreonine occurs at positions 1874 and 1886. Residues 1882–1893 are compositionally biased toward low complexity; the sequence is TVEGTPGTTEQE. The residue at position 1903 (Lys-1903) is an N6-acetyllysine. Over residues 1923–1935 the composition is skewed to basic and acidic residues; that stretch reads EGAKSAEATKESS. Phosphoserine is present on residues Ser-1927 and Ser-1942. 2 consecutive short sequence motifs (LXXLL) follow at residues 1965-1969 and 2083-2087; these read LCTLL and LDGLL.

Component of SWI/SNF chromatin remodeling complexes, in some of which it can be mutually exclusive with ARID1B/BAF250B. The canonical complex contains a catalytic subunit (either SMARCA4/BRG1/BAF190A or SMARCA2/BRM/BAF190B) and at least SMARCE1, ACTL6A/BAF53, SMARCC1/BAF155, SMARCC2/BAF170, and SMARCB1/SNF5/BAF47. Other subunits specific to each of the complexes may also be present permitting several possible combinations developmentally and tissue specific. Component of the BAF (SWI/SNF-A) complex, which includes at least actin (ACTB), ARID1A/BAF250A, ARID1B/BAF250B, SMARCA2/BRM, SMARCA4/BRG1/BAF190A, ACTL6A/BAF53, ACTL6B/BAF53B, SMARCE1/BAF57, SMARCC1/BAF155, SMARCC2/BAF170, SMARCB1/SNF5/INI1, and one or more SMARCD1/BAF60A, SMARCD2/BAF60B, or SMARCD3/BAF60C. In muscle cells, the BAF complex also contains DPF3. Component of neural progenitors-specific chromatin remodeling complex (npBAF complex) composed of at least, ARID1A/BAF250A or ARID1B/BAF250B, SMARCD1/BAF60A, SMARCD3/BAF60C, SMARCA2/BRM/BAF190B, SMARCA4/BRG1/BAF190A, SMARCB1/BAF47, SMARCC1/BAF155, SMARCE1/BAF57, SMARCC2/BAF170, PHF10/BAF45A, ACTL6A/BAF53A and actin. Component of neuron-specific chromatin remodeling complex (nBAF complex) composed of at least, ARID1A/BAF250A or ARID1B/BAF250B, SMARCD1/BAF60A, SMARCD3/BAF60C, SMARCA2/BRM/BAF190B, SMARCA4/BRG1/BAF190A, SMARCB1/BAF47, SMARCC1/BAF155, SMARCE1/BAF57, SMARCC2/BAF170, DPF1/BAF45B, DPF3/BAF45C, ACTL6B/BAF53B and actin. Component of a SWI/SNF-like EBAFa complex, at least composed of SMARCA4/BRG1/BAF190A, SMARCB1/BAF47/SNF5, ACTL6A/BAF53A, SMARCE1/BAF57, SMARCD1/BAF60A, SMARCC1/BAF155, SMARCC2/BAF170, BAF250A and MLLT1/ENL. Interacts through its C-terminus with SMARCA2/BRM/BAF190B and SMARCA4/BRG1/BAF190A. Interacts with SMARCC1/BAF155. Interacts with FOS (via bZIP domain and leucine-zipper region), FOSB isoform 1 and 2, FOSL1 and FOSL2. Widely expressed. Expressed at high levels in the testis.

The protein resides in the nucleus. Its function is as follows. Involved in transcriptional activation and repression of select genes by chromatin remodeling (alteration of DNA-nucleosome topology). Component of SWI/SNF chromatin remodeling complexes that carry out key enzymatic activities, changing chromatin structure by altering DNA-histone contacts within a nucleosome in an ATP-dependent manner. Binds DNA non-specifically. Belongs to the neural progenitors-specific chromatin remodeling complex (npBAF complex) and the neuron-specific chromatin remodeling complex (nBAF complex). During neural development a switch from a stem/progenitor to a postmitotic chromatin remodeling mechanism occurs as neurons exit the cell cycle and become committed to their adult state. The transition from proliferating neural stem/progenitor cells to postmitotic neurons requires a switch in subunit composition of the npBAF and nBAF complexes. As neural progenitors exit mitosis and differentiate into neurons, npBAF complexes which contain ACTL6A/BAF53A and PHF10/BAF45A, are exchanged for homologous alternative ACTL6B/BAF53B and DPF1/BAF45B or DPF3/BAF45C subunits in neuron-specific complexes (nBAF). The npBAF complex is essential for the self-renewal/proliferative capacity of the multipotent neural stem cells. The nBAF complex along with CREST plays a role regulating the activity of genes essential for dendrite growth. The protein is AT-rich interactive domain-containing protein 1A (Arid1a) of Mus musculus (Mouse).